Here is a 353-residue protein sequence, read N- to C-terminus: Tsukushi (353 aa).

An N-terminal signal peptide occupies residues 1–16 (MPWPLLLLLAVSGAQT). The LRRNT domain maps to 17 to 58 (TRPCFPGCQCEVETFGLFDSFSLTRVDCSGLGPHIMPVPIPL). 10 LRR repeats span residues 59-80 (DTAH…VLAG), 85-106 (TLAG…AFSR), 109-130 (YLES…SFTS), 132-153 (PLSD…AFTT), 159-179 (ALHV…PTRA), 185-206 (TIQS…RDLP), 207-227 (LRYL…AFAG), 230-249 (GLTH…APSG), 255-276 (GLQV…EVFS), and 280-301 (SLQE…LLLH). An N-linked (GlcNAc...) asparagine glycan is attached at Asn74. N-linked (GlcNAc...) asparagine glycosylation is present at Asn137.

In terms of assembly, interacts with FZD4 (via FZ domain); competes with WNT2B for binding to FZD4, inhibiting Wnt signaling and repressing peripheral eye development. Interacts with TGFB1; the interaction contributes to regulation of the hair cycle. Interacts with netrin. Interacts with CCN2.

Its subcellular location is the secreted. Contributes to various developmental events and other processes such as wound healing and cholesterol homeostasis through its interactions with multiple signaling pathways. Wnt signaling inhibitor which competes with WNT2B for binding to Wnt receptor FZD4 and represses WNT2B-dependent development of the peripheral eye. Plays a role in regulating the hair cycle by controlling TGFB1 signaling. Required for the development of the anterior commissure in the brain by inhibiting neurite outgrowth. Essential for terminal differentiation of hippocampal neural stem cells. Plays a role in regulating bone elongation and bone mass by modulating growth plate chondrocyte function and overall body size. Required for development of the inner ear through its involvement in stereocilia formation in inner hair cells. Facilitates wound healing by inhibiting secretion of TGFB1 from macrophages which prevents myofibroblast differentiation, maintaining inflammatory cell quiescence. Plays a role in cholesterol homeostasis by reducing circulating high-density lipoprotein cholesterol, lowering cholesterol efflux capacity and decreasing cholesterol-to-bile acid conversion in the liver. In one study, shown to negatively regulate sympathetic innervation in brown fat, leading to reduced energy expenditure. In another study, shown not to affect brown fat thermogenic capacity, body weight gain or glucose homeostasis. The polypeptide is Tsukushi (TSKU) (Homo sapiens (Human)).